The sequence spans 419 residues: Octopressin receptor (419 aa).

Residues 1 to 37 (MENFTEENLHPWITTTTRVYNNVTIFPQYDDELGKFE) are Extracellular-facing. Asn-3 and Asn-22 each carry an N-linked (GlcNAc...) asparagine glycan. Residues 38 to 58 (IMVLCILCFMALFGNAVVLIV) traverse the membrane as a helical segment. The Cytoplasmic segment spans residues 59–80 (LRIKKTTLTRMQLLIVYLSVTD). A helical transmembrane segment spans residues 81 to 101 (ISVALFHILPTIILKINVYFL). Residues 102–108 (GDISACR) lie on the Extracellular side of the membrane. An intrachain disulfide couples Cys-107 to Cys-182. A helical transmembrane segment spans residues 109 to 129 (VYQFITVAELYASSFVLIVTA). Topologically, residues 130 to 153 (LDRYISICHPLAAHMWTNRRVHMT) are cytoplasmic. The helical transmembrane segment at 154-174 (TALALFLALMCSLPQLDAVLV) threads the bilayer. At 175-192 (DFHGGKLCRPNLTTELAN) the chain is on the extracellular side. Residue Asn-185 is glycosylated (N-linked (GlcNAc...) asparagine). The helical transmembrane segment at 193-213 (IAYSWWAFCSVFFVPLLLLIF) threads the bilayer. The Cytoplasmic segment spans residues 214 to 292 (FYGRICFVVW…VSKSKIKTIK (79 aa)). Residues 253–274 (SQTSSENRVKNYSDARDKDSSR) are disordered. Basic and acidic residues predominate over residues 259–274 (NRVKNYSDARDKDSSR). Residues 293 to 313 (LTFSVVACFIICYTPFFTVLM) traverse the membrane as a helical segment. Over 314 to 329 (ARTYDAELSSAQTPAL) the chain is Extracellular. The chain crosses the membrane as a helical span at residues 330-350 (VILSLLPSLNSCTNPWIYLAF). Residues 351–419 (SGKVWCRQQS…TTALMSSSPC (69 aa)) lie on the Cytoplasmic side of the membrane.

Belongs to the G-protein coupled receptor 1 family. Vasopressin/oxytocin receptor subfamily. As to expression, present in the nervous system and peripheral tissues.

Its subcellular location is the cell membrane. In terms of biological role, acts as a receptor for octopressin. This is Octopressin receptor from Octopus vulgaris (Common octopus).